A 203-amino-acid chain; its full sequence is Holliday junction branch migration complex subunit RuvA (203 aa).

The segment at 1 to 64 (MIGRLNGILV…EDAQLLYGFI (64 aa)) is domain I. Residues 65-143 (TKQERALFRL…SLLEASVGNE (79 aa)) form a domain II region. The interval 144-154 (REFMLQTNYTA) is flexible linker. The tract at residues 155–203 (PAANAEEDAISALVSLGYKPPQASRAVSKAYKEGMDTETLIKLALKSML) is domain III.

This sequence belongs to the RuvA family. In terms of assembly, homotetramer. Forms an RuvA(8)-RuvB(12)-Holliday junction (HJ) complex. HJ DNA is sandwiched between 2 RuvA tetramers; dsDNA enters through RuvA and exits via RuvB. An RuvB hexamer assembles on each DNA strand where it exits the tetramer. Each RuvB hexamer is contacted by two RuvA subunits (via domain III) on 2 adjacent RuvB subunits; this complex drives branch migration. In the full resolvosome a probable DNA-RuvA(4)-RuvB(12)-RuvC(2) complex forms which resolves the HJ.

The protein localises to the cytoplasm. In terms of biological role, the RuvA-RuvB-RuvC complex processes Holliday junction (HJ) DNA during genetic recombination and DNA repair, while the RuvA-RuvB complex plays an important role in the rescue of blocked DNA replication forks via replication fork reversal (RFR). RuvA specifically binds to HJ cruciform DNA, conferring on it an open structure. The RuvB hexamer acts as an ATP-dependent pump, pulling dsDNA into and through the RuvAB complex. HJ branch migration allows RuvC to scan DNA until it finds its consensus sequence, where it cleaves and resolves the cruciform DNA. This is Holliday junction branch migration complex subunit RuvA from Shewanella denitrificans (strain OS217 / ATCC BAA-1090 / DSM 15013).